The chain runs to 406 residues: E3 ubiquitin-protein ligase RING1 (406 aa).

Threonine 24 carries the phosphothreonine modification. Positions 30–234 (MDGTEIAVSP…GGAGSEDSGD (205 aa)) are necessary for transcriptional repression. Position 38 is a phosphoserine (serine 38). The RING-type zinc finger occupies 48 to 88 (CPICLDMLKNTMTTKECLHRFCSDCIVTALRSGNKECPTCR). Phosphoserine is present on residues serine 140, serine 187, and serine 190. 2 disordered regions span residues 151–263 (HRAQ…GEIE) and 309–354 (QQQE…PSLE). The span at 175–187 (EPGEGEGDGEDIS) shows a compositional bias: acidic residues. The Nuclear localization signal signature appears at 201–204 (KRPR). A compositionally biased stretch (gly residues) spans 205 to 228 (GGGAGGSSVGTGGGAAGGACGGAG). Threonine 215 is subject to Phosphothreonine. Serine 229 and serine 232 each carry phosphoserine. Positions 230 to 406 (EDSGDRGGTL…LCYAPTKDPK (177 aa)) are necessary for interaction with CBX2. Positions 235 to 244 (RGGTLGGGTL) are enriched in gly residues. Residues 246–258 (PPSPPGAPSPPEP) show a composition bias toward pro residues. 2 positions are modified to phosphoserine: serine 248 and serine 254. Positions 317–343 (GGPGGGASDTGGPDGGGGERGVSGGGE) are enriched in gly residues.

As to quaternary structure, component of chromatin-associated Polycomb (PcG) complexes. Part of the E2F6.com-1 complex in G0 phase composed of E2F6, MGA, MAX, TFDP1, CBX3, BAT8, EUHMTASE1, RING1, RNF2/RING2 MBLR, L3MBTL2 and YAF2. Interacts with CBX2 and PCGF6. Component of a PRC1-like complex. Component of repressive BCOR complex containing Polycomb group subcomplex at least composed of RYBP, PCGF1, BCOR and RNF2/RING2. Interacts with BMI1, PHC2, PCGF2, RNF2; CBX6, CBX7 and CBX8. Interacts with MN1. Interacts with USP26.

Its subcellular location is the nucleus speckle. The enzyme catalyses S-ubiquitinyl-[E2 ubiquitin-conjugating enzyme]-L-cysteine + [acceptor protein]-L-lysine = [E2 ubiquitin-conjugating enzyme]-L-cysteine + N(6)-ubiquitinyl-[acceptor protein]-L-lysine.. Its pathway is protein modification; protein ubiquitination. Functionally, constitutes one of the E3 ubiquitin-protein ligases that mediate monoubiquitination of 'Lys-119' of histone H2A, thereby playing a central role in histone code and gene regulation. H2A 'Lys-119' ubiquitination gives a specific tag for epigenetic transcriptional repression and participates in X chromosome inactivation of female mammals. Essential component of a Polycomb group (PcG) multiprotein PRC1-like complex, a complex class required to maintain the transcriptionally repressive state of many genes, including Hox genes, throughout development. PcG PRC1 complex acts via chromatin remodeling and modification of histones, rendering chromatin heritably changed in its expressibility. Compared to RNF2/RING2, it does not have the main E3 ubiquitin ligase activity on histone H2A, and it may rather act as a modulator of RNF2/RING2 activity. The polypeptide is E3 ubiquitin-protein ligase RING1 (Rattus norvegicus (Rat)).